A 599-amino-acid polypeptide reads, in one-letter code: Stromal 70 kDa heat shock-related protein, chloroplastic (599 aa).

The disordered stretch occupies residues 545–573; the sequence is NQPGAGGEPGAAQAQHQEQSSARQIQRAK. Positions 554-568 are enriched in low complexity; it reads GAAQAQHQEQSSARQ.

Belongs to the heat shock protein 70 family.

Its subcellular location is the plastid. The protein localises to the chloroplast stroma. Its function is as follows. Interacts with newly imported chloroplast proteins to assist in their maturation. This chain is Stromal 70 kDa heat shock-related protein, chloroplastic (CHSP70), found in Spinacia oleracea (Spinach).